Here is a 494-residue protein sequence, read N- to C-terminus: Costunolide synthase (494 aa).

The helical transmembrane segment at proline 3–serine 23 threads the bilayer. Position 432 (cysteine 432) interacts with heme.

The protein belongs to the cytochrome P450 family. Heme serves as cofactor.

It is found in the membrane. It carries out the reaction germacra-1(10),4,11(13)-trien-12-oate + reduced [NADPH--hemoprotein reductase] + O2 = (+)-costunolide + oxidized [NADPH--hemoprotein reductase] + 2 H2O. Hydroxylates germacrene A acid to 6-alpha-hydroxy-germacrne A acid, a precursor of sesquiterpene lactones that spontaneously undergoes a lactonization which yields costunolide. Costunolide can then spontaneously conjugate to glutathione or cysteine. In Cichorium intybus (Chicory), this protein is Costunolide synthase (CYP71BL3).